Reading from the N-terminus, the 223-residue chain is Phosphoribosylformylglycinamidine synthase subunit PurQ (223 aa).

In terms of domain architecture, Glutamine amidotransferase type-1 spans 3-223; it reads SAVVQLPGLN…FASALDVIAA (221 aa). Cys86 (nucleophile) is an active-site residue. Active-site residues include His196 and Glu198.

In terms of assembly, part of the FGAM synthase complex composed of 1 PurL, 1 PurQ and 2 PurS subunits.

The protein resides in the cytoplasm. It catalyses the reaction N(2)-formyl-N(1)-(5-phospho-beta-D-ribosyl)glycinamide + L-glutamine + ATP + H2O = 2-formamido-N(1)-(5-O-phospho-beta-D-ribosyl)acetamidine + L-glutamate + ADP + phosphate + H(+). It carries out the reaction L-glutamine + H2O = L-glutamate + NH4(+). The protein operates within purine metabolism; IMP biosynthesis via de novo pathway; 5-amino-1-(5-phospho-D-ribosyl)imidazole from N(2)-formyl-N(1)-(5-phospho-D-ribosyl)glycinamide: step 1/2. Its function is as follows. Part of the phosphoribosylformylglycinamidine synthase complex involved in the purines biosynthetic pathway. Catalyzes the ATP-dependent conversion of formylglycinamide ribonucleotide (FGAR) and glutamine to yield formylglycinamidine ribonucleotide (FGAM) and glutamate. The FGAM synthase complex is composed of three subunits. PurQ produces an ammonia molecule by converting glutamine to glutamate. PurL transfers the ammonia molecule to FGAR to form FGAM in an ATP-dependent manner. PurS interacts with PurQ and PurL and is thought to assist in the transfer of the ammonia molecule from PurQ to PurL. In Rhizobium meliloti (strain 1021) (Ensifer meliloti), this protein is Phosphoribosylformylglycinamidine synthase subunit PurQ.